Here is a 114-residue protein sequence, read N- to C-terminus: Cytochrome c oxidase subunit 4B (114 aa).

3 helical membrane passes run 29–49 (QIVV…AVAT), 56–76 (FAIP…LFFF), and 89–109 (AFMI…MLLL).

The protein belongs to the cytochrome c oxidase bacterial subunit 4 family.

It is found in the cell membrane. It catalyses the reaction 4 Fe(II)-[cytochrome c] + O2 + 8 H(+)(in) = 4 Fe(III)-[cytochrome c] + 2 H2O + 4 H(+)(out). The chain is Cytochrome c oxidase subunit 4B (ctaF) from Alkalihalophilus pseudofirmus (strain ATCC BAA-2126 / JCM 17055 / OF4) (Bacillus pseudofirmus).